The sequence spans 351 residues: Uroporphyrinogen decarboxylase (351 aa).

Substrate is bound by residues 25–29 (RQAGR), D74, Y151, S206, and H325.

It belongs to the uroporphyrinogen decarboxylase family. In terms of assembly, homodimer.

The protein localises to the cytoplasm. It carries out the reaction uroporphyrinogen III + 4 H(+) = coproporphyrinogen III + 4 CO2. It participates in porphyrin-containing compound metabolism; protoporphyrin-IX biosynthesis; coproporphyrinogen-III from 5-aminolevulinate: step 4/4. Its function is as follows. Catalyzes the decarboxylation of four acetate groups of uroporphyrinogen-III to yield coproporphyrinogen-III. In Chlorobium chlorochromatii (strain CaD3), this protein is Uroporphyrinogen decarboxylase.